Consider the following 131-residue polypeptide: Small ribosomal subunit protein bS6 (131 aa).

Residues 99-131 are disordered; sequence ASPMVKAKDERRERREDFATETNEDSDAGDSEE. A compositionally biased stretch (basic and acidic residues) spans 104–116; the sequence is KAKDERRERREDF. Residues 120–131 are compositionally biased toward acidic residues; the sequence is TNEDSDAGDSEE.

This sequence belongs to the bacterial ribosomal protein bS6 family.

Functionally, binds together with bS18 to 16S ribosomal RNA. This is Small ribosomal subunit protein bS6 from Sodalis glossinidius (strain morsitans).